Here is a 90-residue protein sequence, read N- to C-terminus: Inactive casein kinase II subunit alpha-2 (90 aa).

ATP contacts are provided by residues 40–48 (VGRGKYSEV) and Lys63.

It belongs to the protein kinase superfamily. Ser/Thr protein kinase family. CK2 subfamily.

Functionally, the Nipponbare allele of HD6 contains a premature stop codon, resulting in a truncated non-functional product. The chain is Inactive casein kinase II subunit alpha-2 from Oryza sativa subsp. japonica (Rice).